Here is a 177-residue protein sequence, read N- to C-terminus: UPF0114 protein HPAG1_0183 (177 aa).

4 helical membrane-spanning segments follow: residues 15–35 (WLLA…GYVF), 54–74 (LVLS…VLMV), 102–122 (FNAL…IFLL), and 145–165 (PIFW…LAAV).

Belongs to the UPF0114 family.

The protein resides in the cell membrane. In Helicobacter pylori (strain HPAG1), this protein is UPF0114 protein HPAG1_0183.